Reading from the N-terminus, the 598-residue chain is Nuclear receptor subfamily 4 group A member 2 (598 aa).

The tract at residues 1 to 22 (MPCVQAQYGSSPQGASPASQSY) is disordered. The span at 8 to 22 (YGSSPQGASPASQSY) shows a compositional bias: low complexity. Positions 260–335 (EGLCAVCGDN…VGMVKEVVRT (76 aa)) form a DNA-binding region, nuclear receptor. 2 consecutive NR C4-type zinc fingers follow at residues 263 to 283 (CAVC…CEGC) and 299 to 323 (CLAN…FQKC). The Bipartite nuclear localization signal (NLS1) signature appears at 287–314 (FKRTVQKNAKYVCLANKNCPVDKRRRNR). The tract at residues 337-361 (SLKGRRGRLPSKPKSPQEPSPPSPP) is disordered. The Nuclear localization signal (NLS1) motif lies at 338 to 350 (LKGRRGRLPSKPK). Residues 352 to 361 (PQEPSPPSPP) are compositionally biased toward pro residues. Positions 360 to 595 (PPVSLISALV…AIIDKLFLDT (236 aa)) constitute an NR LBD domain. A nuclear export sequence (NES1) motif is present at residues 443–452 (FLELFVLRLA). A nuclear export sequence (NES2) motif is present at residues 568–577 (QGLQRIFYLK).

The protein belongs to the nuclear hormone receptor family. NR4 subfamily. As to quaternary structure, interacts with SFPQ, NCOR2, SIN3A and HADC1. The interaction with NCOR2 increases in the absence of PITX3. Interacts with PER2. Expressed in a number of cell lines of T-cell, B-cell and fibroblast origin. Strong expression in brain tissue.

Its subcellular location is the cytoplasm. The protein resides in the nucleus. Functionally, transcriptional regulator which is important for the differentiation and maintenance of meso-diencephalic dopaminergic (mdDA) neurons during development. It is crucial for expression of a set of genes such as SLC6A3, SLC18A2, TH and DRD2 which are essential for development of mdDA neurons. The chain is Nuclear receptor subfamily 4 group A member 2 (NR4A2) from Homo sapiens (Human).